Here is a 286-residue protein sequence, read N- to C-terminus: General stress protein 39 (286 aa).

A disordered region spans residues 1-26; it reads MANYPKELPAQTQSRQPGIESEMNPS. Position 46-70 (46-70) interacts with NAD(+); it reads LITGGDSGIGRAVSVAYAKEGADIA. Ser178 serves as a coordination point for substrate. Tyr191 (proton acceptor) is an active-site residue.

The protein belongs to the short-chain dehydrogenases/reductases (SDR) family.

The sequence is that of General stress protein 39 (ydaD) from Bacillus subtilis (strain 168).